The sequence spans 310 residues: Malate dehydrogenase (310 aa).

Residues 7–12 and Asp-32 each bind NAD(+); that span reads GAGNVG. Substrate contacts are provided by Arg-81 and Arg-87. Residues Asn-94 and 117–119 each bind NAD(+); that span reads VSN. Residues Asn-119 and Arg-150 each coordinate substrate. The Proton acceptor role is filled by His-174.

It belongs to the LDH/MDH superfamily. MDH type 3 family.

It carries out the reaction (S)-malate + NAD(+) = oxaloacetate + NADH + H(+). Catalyzes the reversible oxidation of malate to oxaloacetate. The sequence is that of Malate dehydrogenase from Pelodictyon phaeoclathratiforme (strain DSM 5477 / BU-1).